We begin with the raw amino-acid sequence, 197 residues long: Dephospho-CoA kinase (197 aa).

Residues 2–197 form the DPCK domain; the sequence is IIGLTGGIAS…GAIKDLANLV (196 aa). Residue 10 to 15 participates in ATP binding; it reads ASGKST.

It belongs to the CoaE family.

Its subcellular location is the cytoplasm. It catalyses the reaction 3'-dephospho-CoA + ATP = ADP + CoA + H(+). Its pathway is cofactor biosynthesis; coenzyme A biosynthesis; CoA from (R)-pantothenate: step 5/5. In terms of biological role, catalyzes the phosphorylation of the 3'-hydroxyl group of dephosphocoenzyme A to form coenzyme A. This chain is Dephospho-CoA kinase, found in Streptococcus thermophilus (strain ATCC BAA-250 / LMG 18311).